A 229-amino-acid polypeptide reads, in one-letter code: MSPVKVFGHPMLTNVARVLLFLEEVGAEYELVPMDFVAGEHKRPQHVQLNPFAKMPGFQDGDLVLFESRAIAKYILRKYGGTAGLDLLGENSGIEELAMVDVWTEVEAQQYYPAISPVVFECIIIPFIIPGGGAAPNQTVVDESLERLRGVLGIYEARLEKSRYLAGDSITFADLNHIPFTFYFMTTPYAKVFDDYPKVKAWWEMLMARPAVQRVCKHMPTEFKLGAQY.

Residues 2-83 form the GST N-terminal domain; that stretch reads SPVKVFGHPM…YILRKYGGTA (82 aa). Glutathione is bound by residues 41–42, 54–55, and 67–68; these read HK, KM, and ES. Residues 93–223 form the GST C-terminal domain; sequence GIEELAMVDV…RVCKHMPTEF (131 aa).

The protein belongs to the GST superfamily. Phi family.

The catalysed reaction is RX + glutathione = an S-substituted glutathione + a halide anion + H(+). Its function is as follows. Conjugation of reduced glutathione to a wide number of exogenous and endogenous hydrophobic electrophiles. The protein is Glutathione S-transferase 1 (GSTA1) of Triticum aestivum (Wheat).